A 66-amino-acid polypeptide reads, in one-letter code: Large ribosomal subunit protein bL33c (66 aa).

This sequence belongs to the bacterial ribosomal protein bL33 family.

Its subcellular location is the plastid. It localises to the chloroplast. This chain is Large ribosomal subunit protein bL33c, found in Liriodendron tulipifera (Tuliptree).